A 204-amino-acid polypeptide reads, in one-letter code: Protein OPG030 (204 aa).

A BACK domain is found at 95 to 177 (FLRQYINNNI…ITYSELTNAI (83 aa)).

This sequence belongs to the orthopoxvirus OPG030 family.

This Homo sapiens (Human) protein is Protein OPG030 (OPG30).